Here is a 302-residue protein sequence, read N- to C-terminus: Transcription factor bHLH7 (302 aa).

Positions 124 to 154 (QPMSQPAPPMPHQQSTIRPRVRARRGQATDP) are disordered. Residues 150-199 (QATDPHSIAERLRRERIAERIRSLQELVPTVNKTDRAAMIDEIVDYVKFL) form the bHLH domain.

Homodimer. In terms of tissue distribution, expressed constitutively in roots, leaves, stems and flowers.

The protein localises to the nucleus. This is Transcription factor bHLH7 (BHLH7) from Arabidopsis thaliana (Mouse-ear cress).